Here is a 376-residue protein sequence, read N- to C-terminus: Germination-specific cysteine protease 1 (376 aa).

Positions 1–22 (MAPSTKVLSLLLLYVVVSLASG) are cleaved as a signal peptide. Residues 23-144 (DESIINDHLQ…KYSAAVNGKE (122 aa)) constitute a propeptide, activation peptide. N-linked (GlcNAc...) asparagine glycosylation occurs at N93. Intrachain disulfides connect C166/C208, C200/C241, and C299/C351. Residue C169 is part of the active site. Residues H305 and N325 contribute to the active site.

It belongs to the peptidase C1 family.

Its function is as follows. Probable thiol protease. This chain is Germination-specific cysteine protease 1, found in Arabidopsis thaliana (Mouse-ear cress).